A 353-amino-acid polypeptide reads, in one-letter code: MGCGMSTEDKEGKARNEEIENQLKRDKMMQRNEIKMLLLGAGESGKSTILKQMKLIHEGGYSRDERESFKEIIYSNTVQSMRVILEAMESLELPLEDARNEYHVQTVFMQPAQIEGDSLPSEVGNAIAALWQDAGVQECFKRSREYQLNDSAKYYFDSIERIAQSDYLPTDQDVLRSRVKTTGITETTFIIGDLTYRMFDVGGQRSERKKWIHCFENVTTILFLVAISEYDQLLFEDETVNRMQEALTLFDSICNSRWFVKTSIILFLNKIDRFKEKLPVSPMKNYFPDYEGGADYAAACDYILNRFVSLNQAEQKQIYTHFTCATDTTQIRFVMAAVNDIIIQENLRLCGLI.

Residues 1 to 25 (MGCGMSTEDKEGKARNEEIENQLKR) are disordered. Residue G2 is the site of N-myristoyl glycine attachment. C3 carries the S-palmitoyl cysteine lipid modification. Basic and acidic residues predominate over residues 7 to 25 (TEDKEGKARNEEIENQLKR). A G-alpha domain is found at 32–353 (NEIKMLLLGA…QENLRLCGLI (322 aa)). Residues 35-48 (KMLLLGAGESGKST) form a G1 motif region. The GTP site is built by E43, S44, G45, K46, S47, T48, D150, L175, T181, G203, N269, K270, D272, and A325. Residue S47 coordinates Mg(2+). Residues 173–181 (DVLRSRVKT) form a G2 motif region. Residue T181 participates in Mg(2+) binding. The interval 196–205 (YRMFDVGGQR) is G3 motif. The tract at residues 265-272 (ILFLNKID) is G4 motif. The tract at residues 323-328 (TCATDT) is G5 motif.

Belongs to the G-alpha family. G(q) subfamily. G proteins are composed of 3 units; alpha, beta and gamma. The alpha chain contains the guanine nucleotide binding site. Requires Mg(2+) as cofactor.

Its function is as follows. Guanine nucleotide-binding proteins (G proteins) are involved as modulators or transducers in various transmembrane signaling systems. This is Guanine nucleotide-binding protein subunit alpha (fadA) from Emericella nidulans (strain FGSC A4 / ATCC 38163 / CBS 112.46 / NRRL 194 / M139) (Aspergillus nidulans).